Here is a 124-residue protein sequence, read N- to C-terminus: Protein RibT (124 aa).

An N-acetyltransferase domain is found at 3 to 124 (IRYKKSFEKI…QQDQDISYNN (122 aa)).

Involved in riboflavin biosynthesis. This chain is Protein RibT (ribT), found in Bacillus subtilis (strain 168).